The sequence spans 285 residues: RING finger protein 223 (285 aa).

The RING-type zinc-finger motif lies at 81-132; it reads CSICFSGYDNIFKTPKELSCSHVFCLECLARLAAAQPAGRSGREAVPCPFCR. The chain crosses the membrane as a helical span at residues 230 to 250; that stretch reads VALVSVLLLVLFCVILWPVQC.

The protein localises to the membrane. This chain is RING finger protein 223 (Rnf223), found in Mus musculus (Mouse).